Here is a 617-residue protein sequence, read N- to C-terminus: Arrestin domain-containing protein B (617 aa).

The 109-residue stretch at 1-109 folds into the C2 domain; that stretch reads MDNRGLRLFI…ATFGQTDKWL (109 aa). Ca(2+)-binding residues include D20, D27, D76, D78, and D84.

The protein belongs to the arrestin family. Ca(2+) is required as a cofactor.

This Dictyostelium discoideum (Social amoeba) protein is Arrestin domain-containing protein B (adcB).